The chain runs to 118 residues: Group 1 truncated hemoglobin GlbN (118 aa).

Histidine 70 provides a ligand contact to heme.

Belongs to the truncated hemoglobin family. Group I subfamily. In terms of assembly, monomer. Requires heme as cofactor.

Its subcellular location is the membrane. This chain is Group 1 truncated hemoglobin GlbN (glbN), found in Nostoc sp. (strain MUN 8820).